A 228-amino-acid polypeptide reads, in one-letter code: Ephrin-A5b (228 aa).

Residues 1-20 form the signal peptide; that stretch reads MLQAEMIVFVGVILWMCVFS. The region spanning 29 to 162 is the Ephrin RBD domain; the sequence is ADRYAVFWNR…KLKVFVRPPN (134 aa). Asparagine 37 carries an N-linked (GlcNAc...) asparagine glycan. 2 disulfide bridges follow: cysteine 62–cysteine 102 and cysteine 90–cysteine 151. Over residues 184–198 the composition is skewed to basic and acidic residues; the sequence is LEPRDDTSHEAEPSR. Residues 184-205 form a disordered region; that stretch reads LEPRDDTSHEAEPSRSDVSTSG. A lipid anchor (GPI-anchor amidated serine) is attached at serine 204. Residues 205–228 constitute a propeptide, removed in mature form; the sequence is GLRHQTSRPLLALLLLCISLYLLL.

It belongs to the ephrin family. Widespread expression in the embryo.

It localises to the cell membrane. In terms of biological role, cell surface GPI-bound ligand for Eph receptors, a family of receptor tyrosine kinases which are crucial for migration, repulsion and adhesion during neuronal, vascular and epithelial development. Binds promiscuously Eph receptors residing on adjacent cells, leading to contact-dependent bidirectional signaling into neighboring cells. Induces compartmentalized signaling within a caveolae-like membrane microdomain when bound to the extracellular domain of its cognate receptor. This signaling event requires the activity of the Fyn tyrosine kinase. Activates the epha3 receptor to regulate cell-cell adhesion and cytoskeletal organization. With the receptor epha2 may regulate lens fiber cells shape and interactions and be important for lens transparency maintenance. May function actively to stimulate axon fasciculation. Controls axon growth and may be involved in the creation of the retino-tectal map. In Danio rerio (Zebrafish), this protein is Ephrin-A5b (efna5b).